The following is a 175-amino-acid chain: Epididymal-specific lipocalin-8 (175 aa).

An N-terminal signal peptide occupies residues 1–22 (MEARLLSNVCGFFLVFLLQAES). 2 N-linked (GlcNAc...) asparagine glycosylation sites follow: Asn66 and Asn74. Cys79 and Cys166 are oxidised to a cystine.

This sequence belongs to the calycin superfamily. Lipocalin family. Predominantly expressed in epididymis.

Its subcellular location is the secreted. Functionally, may play a role in male fertility. May act as a retinoid carrier protein within the epididymis. This chain is Epididymal-specific lipocalin-8 (Lcn8), found in Mus musculus (Mouse).